The following is a 264-amino-acid chain: uncharacterized protein (264 aa).

The helical transmembrane segment at Leu-7 to Thr-27 threads the bilayer.

Belongs to the staphylococcal tandem lipoprotein family.

The protein resides in the cell membrane. This is an uncharacterized protein from Staphylococcus aureus (strain N315).